The sequence spans 454 residues: DNA-binding protein (454 aa).

A disordered region spans residues 1–41; sequence MSHKKVVAISESSSDEEVPVAPPTAPPKKRQRKAVEEPRGH. Y129 is subject to Phosphotyrosine; by host. Zn(2+) contacts are provided by C213 and H215. The tract at residues 226-260 is flexible loop; that stretch reads VEMDVNSENAQRALKENPEKTKIVSNRWGRNVVQF. Zn(2+) is bound by residues C268, C284, C325, C327, C378, and C394. Residues 440–454 form a C-terminal arm, DBP binding region; that stretch reads TILPQGQHDDDLVLF.

The protein belongs to the adenoviridae E2A DNA-binding protein family. As to quaternary structure, homomultimerizes on viral ssDNA bound to pTP. Forms a initiation complex with viral polymerase, pTP and hosts NFIA and POU2F1/OCT1. Interacts with host SRCAP.

The protein resides in the host nucleus. Plays a role in the elongation phase of viral strand displacement replication by unwinding the template in an ATP-independent fashion, employing its capacity to form multimers. Also enhances the rate of initiation. Released from template upon second strand synthesis. Assembles in complex with viral pTP, viral pol, host NFIA and host POU2F1/OCT1 on viral origin of replication. Covers the whole ssDNA genome during synthesis. The complementary strand synthesis induces its relese from DNA template. May inhibit cellular transcription mediated by the interaction between host SRCAP and CBP. In Canine adenovirus serotype 1 (strain RI261) (CAdV-1), this protein is DNA-binding protein.